The sequence spans 261 residues: Pantothenate synthetase (261 aa).

29–36 (MGALHNGH) is an ATP binding site. The active-site Proton donor is the His-36. Gln-60 is a binding site for (R)-pantoate. Gln-60 is a beta-alanine binding site. 147-150 (GEKD) serves as a coordination point for ATP. Gln-153 contacts (R)-pantoate. 184–187 (LSSR) contacts ATP.

Belongs to the pantothenate synthetase family. As to quaternary structure, homodimer.

It is found in the cytoplasm. It catalyses the reaction (R)-pantoate + beta-alanine + ATP = (R)-pantothenate + AMP + diphosphate + H(+). Its pathway is cofactor biosynthesis; (R)-pantothenate biosynthesis; (R)-pantothenate from (R)-pantoate and beta-alanine: step 1/1. In terms of biological role, catalyzes the condensation of pantoate with beta-alanine in an ATP-dependent reaction via a pantoyl-adenylate intermediate. This Francisella tularensis subsp. mediasiatica (strain FSC147) protein is Pantothenate synthetase.